A 391-amino-acid polypeptide reads, in one-letter code: Probable acridone synthase 4 (391 aa).

Residue Cys-164 is part of the active site.

Belongs to the thiolase-like superfamily. Chalcone/stilbene synthases family.

It carries out the reaction N-methylanthraniloyl-CoA + 3 malonyl-CoA + 3 H(+) = 1,3-dihydroxy-N-methylacridone + 3 CO2 + 4 CoA + H2O. The protein is Probable acridone synthase 4 (ACS4) of Ruta graveolens (Common rue).